The primary structure comprises 395 residues: Probable sugar efflux transporter (395 aa).

12 consecutive transmembrane segments (helical) span residues 13 to 33, 48 to 68, 82 to 102, 107 to 127, 134 to 154, 168 to 188, 207 to 227, 244 to 264, 272 to 292, 297 to 317, 331 to 351, and 363 to 383; these read VVSL…PVAL, VGLI…PCML, IFIL…YWVL, IGVA…VVRL, AQAL…GLPL, FVLI…LLPV, PALL…FTAY, FTTI…MLFS, AGFL…LLPL, WSLS…SLGM, VAMA…ALLG, and IGYM…FTFV.

The protein belongs to the major facilitator superfamily. SotB (TC 2.A.1.2) family.

Its subcellular location is the cell inner membrane. Its function is as follows. Involved in the efflux of sugars. The physiological role may be the reduction of the intracellular concentration of toxic sugars or sugar metabolites. In Pectobacterium atrosepticum (strain SCRI 1043 / ATCC BAA-672) (Erwinia carotovora subsp. atroseptica), this protein is Probable sugar efflux transporter.